A 390-amino-acid polypeptide reads, in one-letter code: Prostaglandin E2 receptor EP3 subtype (390 aa).

Topologically, residues 1 to 53 (MKETRGYGGDAPFCTRLNHSYTGMWAPERSAEARGNLTRPPGSGEDCGSVSVA) are extracellular. N-linked (GlcNAc...) asparagine glycans are attached at residues N18 and N36. Residues 54–78 (FPITMLLTGFVGNALAMLLVSRSYR) traverse the membrane as a helical segment. The Cytoplasmic segment spans residues 79-91 (RRESKRKKSFLLC). The chain crosses the membrane as a helical span at residues 92-112 (IGWLALTDLVGQLLTTPVVIV). The Extracellular portion of the chain corresponds to 113 to 131 (VYLSKQRWEHIDPSGRLCT). Residues 132-153 (FFGLTMTVFGLSSLFIASAMAV) form a helical membrane-spanning segment. The Cytoplasmic segment spans residues 154-175 (ERALAIRAPHWYASHMKTRATR). A helical membrane pass occupies residues 176–197 (AVLLGVWLAVLAFALLPVLGVG). The Extracellular segment spans residues 198–227 (QYTVQWPGTWCFISTGRGGNGTSSSHNWGN). The chain crosses the membrane as a helical span at residues 228–253 (LFFASAFAFLGLLALTVTFSCNLATI). Over 254–283 (KALVSRCRAKATASQSSAQWGRITTETAIQ) the chain is Cytoplasmic. Residues 284 to 307 (LMGIMCVLSVCWSPLLIMMLKMIF) traverse the membrane as a helical segment. The Extracellular portion of the chain corresponds to 308 to 327 (NQTSVEHCKTHTEKQKECNF). A helical transmembrane segment spans residues 328–349 (FLIAVRLASLNQILDPWVYLLL). Residues 350 to 390 (RKILLRKFCQIRYHTNNYASSSTSLPCQCSSTLMWSDHLER) lie on the Cytoplasmic side of the membrane.

This sequence belongs to the G-protein coupled receptor 1 family. Interacts (via C-terminus) with MKLN1. As to expression, detected in kidney. Expressed in small intestine, heart, pancreas, gastric fundic mucosa, mammary artery and pulmonary vessels.

The protein localises to the cell membrane. Functionally, receptor for prostaglandin E2 (PGE2). The activity of this receptor can couple to both the inhibition of adenylate cyclase mediated by G(i) proteins, and to an elevation of intracellular calcium. Required for normal development of fever in response to pyrinogens, including IL1B, prostaglandin E2 and bacterial lipopolysaccharide (LPS). Required for normal potentiation of platelet aggregation by prostaglandin E2, and thus plays a role in the regulation of blood coagulation. Required for increased HCO3(-) secretion in the duodenum in response to mucosal acidification, and thereby contributes to the protection of the mucosa against acid-induced ulceration. Not required for normal kidney function, normal urine volume and osmolality. The polypeptide is Prostaglandin E2 receptor EP3 subtype (PTGER3) (Homo sapiens (Human)).